The following is a 141-amino-acid chain: Nucleoside diphosphate kinase (141 aa).

6 residues coordinate ATP: K11, F59, R87, T93, R104, and N114. H117 functions as the Pros-phosphohistidine intermediate in the catalytic mechanism.

Belongs to the NDK family. In terms of assembly, homotetramer. Mg(2+) is required as a cofactor.

The protein resides in the cytoplasm. The enzyme catalyses a 2'-deoxyribonucleoside 5'-diphosphate + ATP = a 2'-deoxyribonucleoside 5'-triphosphate + ADP. It catalyses the reaction a ribonucleoside 5'-diphosphate + ATP = a ribonucleoside 5'-triphosphate + ADP. In terms of biological role, major role in the synthesis of nucleoside triphosphates other than ATP. The ATP gamma phosphate is transferred to the NDP beta phosphate via a ping-pong mechanism, using a phosphorylated active-site intermediate. The polypeptide is Nucleoside diphosphate kinase (Variovorax paradoxus (strain S110)).